The chain runs to 545 residues: Cannabidiolic acid synthase-like 2 (545 aa).

Positions 1-28 (MKCSTFCFWYVCKIIFFFLSFNIQISIA) are cleaved as a signal peptide. A disulfide bond links C37 and C99. Residues N45, N65, N89, and N168 are each glycosylated (N-linked (GlcNAc...) asparagine). The 175-residue stretch at 77–251 (TTPKPLVITT…AAWKIRLVAV (175 aa)) folds into the FAD-binding PCMH-type domain. The segment at residues 114-176 (HDAEGMSYIS…ENLSFPAGYC (63 aa)) is a cross-link (6-(S-cysteinyl)-8alpha-(pros-histidyl)-FAD (His-Cys)). Substrate is bound at residue H292. N-linked (GlcNAc...) asparagine glycosylation is found at N297, N305, N329, and N361. Y417 is a substrate binding site. A glycan (N-linked (GlcNAc...) asparagine) is linked at N467. The Proton acceptor role is filled by Y484. N499 is a glycosylation site (N-linked (GlcNAc...) asparagine).

The protein belongs to the oxygen-dependent FAD-linked oxidoreductase family. It depends on FAD as a cofactor. Post-translationally, the FAD cofactor is bound via a bicovalent 6-S-cysteinyl, 8alpha-N1-histidyl FAD linkage.

The protein resides in the secreted. Functionally, has no cannabidiolic acid synthase activity. The sequence is that of Cannabidiolic acid synthase-like 2 (CBDAS3) from Cannabis sativa (Hemp).